Reading from the N-terminus, the 229-residue chain is Prolactin (229 aa).

The N-terminal stretch at 1–30 (MDKKGWSLKGSLLPLLLLVSDLLLCQSVAS) is a signal peptide. A disulfide bridge connects residues C34 and C41. 3 positions are modified to phosphoserine: S56, S64, and S120. Intrachain disulfides connect C88/C204 and C221/C229.

This sequence belongs to the somatotropin/prolactin family. Interacts with PRLR.

Its subcellular location is the secreted. Prolactin acts primarily on the mammary gland by promoting lactation. This chain is Prolactin (PRL), found in Ailuropoda melanoleuca (Giant panda).